The chain runs to 397 residues: Ribosomal RNA large subunit methyltransferase I (397 aa).

In terms of domain architecture, PUA spans 2–79 (SASIYLVKGR…KEETVDLDFF (78 aa)).

The protein belongs to the methyltransferase superfamily. RlmI family.

It is found in the cytoplasm. The catalysed reaction is cytidine(1962) in 23S rRNA + S-adenosyl-L-methionine = 5-methylcytidine(1962) in 23S rRNA + S-adenosyl-L-homocysteine + H(+). Functionally, specifically methylates the cytosine at position 1962 (m5C1962) of 23S rRNA. This is Ribosomal RNA large subunit methyltransferase I from Aeromonas hydrophila subsp. hydrophila (strain ATCC 7966 / DSM 30187 / BCRC 13018 / CCUG 14551 / JCM 1027 / KCTC 2358 / NCIMB 9240 / NCTC 8049).